The sequence spans 368 residues: Cyanide hydratase (368 aa).

The 280-residue stretch at 6–285 (YKAAVVTSEP…DGLMYVDIDL (280 aa)) folds into the CN hydrolase domain. Catalysis depends on glutamate 46, which acts as the Proton acceptor. The active site involves lysine 128. Cysteine 163 acts as the Nucleophile in catalysis. Residues 341 to 368 (LDRPLEEEDYRQGTDAGETEKASSNGHA) are disordered.

Belongs to the carbon-nitrogen hydrolase superfamily. Nitrilase family. Oligomer of dimers, forming left-handed helical fibers.

It carries out the reaction formamide = hydrogen cyanide + H2O. In terms of biological role, catalyzes the hydration of cyanide to formamide. Degradation of cyanide may be important for plant pathogenic fungi in infection of cyanogenic plants. This is Cyanide hydratase from Microdochium sorghi (Zonate leaf spot disease fungus).